The following is a 367-amino-acid chain: Glutamate 5-kinase (367 aa).

Lys10 provides a ligand contact to ATP. Substrate is bound by residues Asp137 and Asn149. ATP contacts are provided by residues Thr169–Asp170 and Thr211–Lys217. A PUA domain is found at Ala275 to Glu353.

This sequence belongs to the glutamate 5-kinase family.

The protein localises to the cytoplasm. It carries out the reaction L-glutamate + ATP = L-glutamyl 5-phosphate + ADP. It functions in the pathway amino-acid biosynthesis; L-proline biosynthesis; L-glutamate 5-semialdehyde from L-glutamate: step 1/2. In terms of biological role, catalyzes the transfer of a phosphate group to glutamate to form L-glutamate 5-phosphate. The protein is Glutamate 5-kinase of Yersinia pestis bv. Antiqua (strain Antiqua).